The primary structure comprises 147 residues: Ribosome-binding factor A (147 aa).

The interval 126–147 (LKKNAQPAGDAHPYKDDDAMND) is disordered. The span at 137–147 (HPYKDDDAMND) shows a compositional bias: basic and acidic residues.

The protein belongs to the RbfA family. Monomer. Binds 30S ribosomal subunits, but not 50S ribosomal subunits or 70S ribosomes.

It is found in the cytoplasm. Its function is as follows. One of several proteins that assist in the late maturation steps of the functional core of the 30S ribosomal subunit. Associates with free 30S ribosomal subunits (but not with 30S subunits that are part of 70S ribosomes or polysomes). Required for efficient processing of 16S rRNA. May interact with the 5'-terminal helix region of 16S rRNA. This is Ribosome-binding factor A from Corynebacterium diphtheriae (strain ATCC 700971 / NCTC 13129 / Biotype gravis).